The following is a 301-amino-acid chain: MTMKHDVKTFQGFILTLQEYWAQQGCAIVQPLDMEVGAGTFHPQTFLRSLGPEPMSSAYVQPSRRPTDGRYGENPNRLQHYYQFQVVLKPSPDNIQELYLGSLQALGIDTQVHDIRFVEDNWESPTLGAWGLGWEVWLNGMEVTQFTYFQQVGGIECSPVTGEITYGLERLAMYIQEVDSVYDLVWTDGPMGRVTYGDIFHQNEVEQSTYNFEHADVDFMFTLFDQCEKMCQHLLSLDKPLPLPAYEQVMKASHAFNLLDARHAISVTERQRYILRVRAMSKGVAESYYQAREALGFPLCK.

This sequence belongs to the class-II aminoacyl-tRNA synthetase family. Tetramer of two alpha and two beta subunits.

Its subcellular location is the cytoplasm. It catalyses the reaction tRNA(Gly) + glycine + ATP = glycyl-tRNA(Gly) + AMP + diphosphate. The protein is Glycine--tRNA ligase alpha subunit of Shewanella denitrificans (strain OS217 / ATCC BAA-1090 / DSM 15013).